We begin with the raw amino-acid sequence, 508 residues long: GMP synthase [glutamine-hydrolyzing] (508 aa).

The Glutamine amidotransferase type-1 domain maps to 1 to 189; it reads MILVLDFGSQ…ALLVCGCEKT (189 aa). Residue C78 is the Nucleophile of the active site. Catalysis depends on residues H163 and E165. The GMPS ATP-PPase domain occupies 190 to 383; the sequence is WGMQHFAQRE…LGVSQDFLMR (194 aa). Residue 217–223 participates in ATP binding; it reads SGGVDST.

In terms of assembly, homodimer.

The catalysed reaction is XMP + L-glutamine + ATP + H2O = GMP + L-glutamate + AMP + diphosphate + 2 H(+). It participates in purine metabolism; GMP biosynthesis; GMP from XMP (L-Gln route): step 1/1. Its function is as follows. Catalyzes the synthesis of GMP from XMP. The sequence is that of GMP synthase [glutamine-hydrolyzing] (guaA) from Helicobacter pylori (strain ATCC 700392 / 26695) (Campylobacter pylori).